The chain runs to 410 residues: Arginine deiminase (410 aa).

Catalysis depends on C400, which acts as the Amidino-cysteine intermediate.

Belongs to the arginine deiminase family.

The protein resides in the cytoplasm. It catalyses the reaction L-arginine + H2O = L-citrulline + NH4(+). It functions in the pathway amino-acid degradation; L-arginine degradation via ADI pathway; carbamoyl phosphate from L-arginine: step 1/2. In Streptococcus agalactiae serotype III (strain NEM316), this protein is Arginine deiminase.